The sequence spans 138 residues: uncharacterized protein (138 aa).

To phage 186 CP81.

This is an uncharacterized protein from Salmonella typhimurium (strain LT2 / SGSC1412 / ATCC 700720).